We begin with the raw amino-acid sequence, 440 residues long: Thymidine phosphorylase (440 aa).

It belongs to the thymidine/pyrimidine-nucleoside phosphorylase family. Homodimer.

The catalysed reaction is thymidine + phosphate = 2-deoxy-alpha-D-ribose 1-phosphate + thymine. Its pathway is pyrimidine metabolism; dTMP biosynthesis via salvage pathway; dTMP from thymine: step 1/2. Its function is as follows. The enzymes which catalyze the reversible phosphorolysis of pyrimidine nucleosides are involved in the degradation of these compounds and in their utilization as carbon and energy sources, or in the rescue of pyrimidine bases for nucleotide synthesis. This Salmonella dublin (strain CT_02021853) protein is Thymidine phosphorylase.